Here is a 136-residue protein sequence, read N- to C-terminus: Large ribosomal subunit protein uL16 (136 aa).

It belongs to the universal ribosomal protein uL16 family. Part of the 50S ribosomal subunit.

Functionally, binds 23S rRNA and is also seen to make contacts with the A and possibly P site tRNAs. The chain is Large ribosomal subunit protein uL16 from Shewanella denitrificans (strain OS217 / ATCC BAA-1090 / DSM 15013).